Consider the following 361-residue polypeptide: GTP 3',8-cyclase (361 aa).

A disordered region spans residues 1–30 (MTVTALGLPTVARSTGDGSAGASPAPADGP). Over residues 16–30 (GDGSAGASPAPADGP) the composition is skewed to low complexity. The region spanning 34–252 (TYGRAATDLR…LQQHFELTPD (219 aa)) is the Radical SAM core domain. Arginine 43 contributes to the GTP binding site. Residues cysteine 50 and cysteine 54 each contribute to the [4Fe-4S] cluster site. Tyrosine 56 contributes to the S-adenosyl-L-methionine binding site. Cysteine 57 is a binding site for [4Fe-4S] cluster. GTP is bound at residue arginine 94. Glycine 98 serves as a coordination point for S-adenosyl-L-methionine. Threonine 125 lines the GTP pocket. Residue serine 149 coordinates S-adenosyl-L-methionine. Residue lysine 186 coordinates GTP. Residue methionine 220 coordinates S-adenosyl-L-methionine. 2 residues coordinate [4Fe-4S] cluster: cysteine 288 and cysteine 291. 293–295 (RTR) contributes to the GTP binding site. Cysteine 305 contacts [4Fe-4S] cluster.

The protein belongs to the radical SAM superfamily. MoaA family. In terms of assembly, monomer and homodimer. It depends on [4Fe-4S] cluster as a cofactor.

The enzyme catalyses GTP + AH2 + S-adenosyl-L-methionine = (8S)-3',8-cyclo-7,8-dihydroguanosine 5'-triphosphate + 5'-deoxyadenosine + L-methionine + A + H(+). It participates in cofactor biosynthesis; molybdopterin biosynthesis. In terms of biological role, catalyzes the cyclization of GTP to (8S)-3',8-cyclo-7,8-dihydroguanosine 5'-triphosphate. The chain is GTP 3',8-cyclase from Mycolicibacterium smegmatis (strain ATCC 700084 / mc(2)155) (Mycobacterium smegmatis).